The chain runs to 247 residues: uncharacterized protein (247 aa).

Residues leucine 19, aspartate 38, aspartate 63, and valine 64 each coordinate NAD(+). Serine 142 contributes to the substrate binding site. NAD(+)-binding residues include tyrosine 155, lysine 159, and serine 190. Tyrosine 155 functions as the Proton acceptor in the catalytic mechanism.

Belongs to the short-chain dehydrogenases/reductases (SDR) family.

This is an uncharacterized protein from Mycobacterium bovis (strain ATCC BAA-935 / AF2122/97).